The sequence spans 177 residues: Large ribosomal subunit protein uL6 (177 aa).

The protein belongs to the universal ribosomal protein uL6 family. As to quaternary structure, part of the 50S ribosomal subunit.

This protein binds to the 23S rRNA, and is important in its secondary structure. It is located near the subunit interface in the base of the L7/L12 stalk, and near the tRNA binding site of the peptidyltransferase center. The protein is Large ribosomal subunit protein uL6 of Aliivibrio salmonicida (strain LFI1238) (Vibrio salmonicida (strain LFI1238)).